Reading from the N-terminus, the 370-residue chain is NSFL1 cofactor p47 (370 aa).

The tract at residues Ser54–Thr73 is disordered. Residues Ser74, Ser102, and Ser114 each carry the phosphoserine modification. Disordered stretches follow at residues His80 to Asn116 and Thr138 to Leu157. The short motif at Pro109–Pro115 is the Nuclear localization signal element. Ser140 carries the phosphoserine; by CDK1 modification. At Tyr167 the chain carries Phosphotyrosine. A Nuclear localization signal motif is present at residues Arg172–His175. Ser176, Ser192, and Ser272 each carry phosphoserine. The SEP domain occupies Asp179–Val244. One can recognise a UBX domain in the interval Glu291 to Arg368.

It belongs to the NSFL1C family. Part of a ternary complex containing STX5A, NSFL1C and VCP. NSFL1C forms a homotrimer that binds to one end of a VCP homohexamer. The complex binds to membranes enriched in phosphatidylethanolamine-containing lipids and promotes Golgi membrane fusion. Interaction with VCIP135 leads to dissociation of the complex via ATP hydrolysis by VCP. Binds ubiquitin and mono-ubiquitinated proteins via its N-terminal UBA-like domain when bound to VCP. Post-translationally, phosphorylated during mitosis. Phosphorylation inhibits interaction with Golgi membranes and is required for the fragmentation of the Golgi stacks during mitosis. In terms of tissue distribution, highly expressed in heart, brain, spleen, lung, liver, muscle, kidney and testis.

It localises to the nucleus. The protein localises to the golgi apparatus. The protein resides in the golgi stack. It is found in the chromosome. Its subcellular location is the cytoplasm. It localises to the cytoskeleton. The protein localises to the microtubule organizing center. The protein resides in the centrosome. In terms of biological role, reduces the ATPase activity of VCP. Necessary for the fragmentation of Golgi stacks during mitosis and for VCP-mediated reassembly of Golgi stacks after mitosis. May play a role in VCP-mediated formation of transitional endoplasmic reticulum (tER). Inhibits the activity of CTSL (in vitro). Together with UBXN2B/p37, regulates the centrosomal levels of kinase AURKA/Aurora A during mitotic progression by promoting AURKA removal from centrosomes in prophase. Also, regulates spindle orientation during mitosis. The sequence is that of NSFL1 cofactor p47 (Nsfl1c) from Rattus norvegicus (Rat).